Here is a 187-residue protein sequence, read N- to C-terminus: Pyridoxal 5'-phosphate synthase subunit PdxT (187 aa).

47 to 49 provides a ligand contact to L-glutamine; it reads GES. The active-site Nucleophile is cysteine 76. L-glutamine-binding positions include arginine 102 and 128-129; that span reads IR. Active-site charge relay system residues include histidine 165 and glutamate 167.

It belongs to the glutaminase PdxT/SNO family. In the presence of PdxS, forms a dodecamer of heterodimers. Only shows activity in the heterodimer.

The catalysed reaction is aldehydo-D-ribose 5-phosphate + D-glyceraldehyde 3-phosphate + L-glutamine = pyridoxal 5'-phosphate + L-glutamate + phosphate + 3 H2O + H(+). It carries out the reaction L-glutamine + H2O = L-glutamate + NH4(+). The protein operates within cofactor biosynthesis; pyridoxal 5'-phosphate biosynthesis. Catalyzes the hydrolysis of glutamine to glutamate and ammonia as part of the biosynthesis of pyridoxal 5'-phosphate. The resulting ammonia molecule is channeled to the active site of PdxS. The polypeptide is Pyridoxal 5'-phosphate synthase subunit PdxT (Methanococcus vannielii (strain ATCC 35089 / DSM 1224 / JCM 13029 / OCM 148 / SB)).